Consider the following 95-residue polypeptide: Succinate dehydrogenase membrane anchor subunit (95 aa).

Topologically, residues Met1–Leu19 are mitochondrial matrix. A helical transmembrane segment spans residues Tyr20–Ile40. Residue Glu41 is a topological domain, mitochondrial intermembrane. The chain crosses the membrane as a helical span at residues Ile42–Ile62. His53 lines the heme pocket. The Mitochondrial matrix portion of the chain corresponds to Glu63–Gln74. Tyr65 contributes to the a ubiquinone binding site. A helical membrane pass occupies residues Tyr75–Leu95.

Part of an enzyme complex containing four subunits: a flavoprotein, an iron-sulfur protein, plus two membrane-anchoring proteins. The cofactor is heme.

It localises to the mitochondrion inner membrane. Its pathway is carbohydrate metabolism; tricarboxylic acid cycle. In terms of biological role, membrane-anchoring subunit of succinate dehydrogenase (SDH). The polypeptide is Succinate dehydrogenase membrane anchor subunit (SDH4) (Porphyra purpurea (Red seaweed)).